A 464-amino-acid chain; its full sequence is ATP synthase subunit beta 2 (464 aa).

Position 147–154 (147–154 (GGAGVGKT)) interacts with ATP.

It belongs to the ATPase alpha/beta chains family. F-type ATPases have 2 components, CF(1) - the catalytic core - and CF(0) - the membrane proton channel. CF(1) has five subunits: alpha(3), beta(3), gamma(1), delta(1), epsilon(1). CF(0) has four main subunits: a(1), b(1), b'(1) and c(9-12).

It localises to the cell inner membrane. It catalyses the reaction ATP + H2O + 4 H(+)(in) = ADP + phosphate + 5 H(+)(out). In terms of biological role, produces ATP from ADP in the presence of a proton gradient across the membrane. The catalytic sites are hosted primarily by the beta subunits. This is ATP synthase subunit beta 2 from Cereibacter sphaeroides (strain ATCC 17023 / DSM 158 / JCM 6121 / CCUG 31486 / LMG 2827 / NBRC 12203 / NCIMB 8253 / ATH 2.4.1.) (Rhodobacter sphaeroides).